Reading from the N-terminus, the 212-residue chain is Phosphoribosylglycinamide formyltransferase (212 aa).

11-13 (GSN) is a binding site for N(1)-(5-phospho-beta-D-ribosyl)glycinamide. (6R)-10-formyltetrahydrofolate-binding positions include R64, 89–92 (MRIL), and N106. H108 (proton donor) is an active-site residue. 140–144 (TDELD) provides a ligand contact to (6R)-10-formyltetrahydrofolate. 170–173 (QTQE) is a N(1)-(5-phospho-beta-D-ribosyl)glycinamide binding site.

It belongs to the GART family. As to quaternary structure, monomer. Homodimer below pH 6.8.

It carries out the reaction N(1)-(5-phospho-beta-D-ribosyl)glycinamide + (6R)-10-formyltetrahydrofolate = N(2)-formyl-N(1)-(5-phospho-beta-D-ribosyl)glycinamide + (6S)-5,6,7,8-tetrahydrofolate + H(+). It functions in the pathway purine metabolism; IMP biosynthesis via de novo pathway; N(2)-formyl-N(1)-(5-phospho-D-ribosyl)glycinamide from N(1)-(5-phospho-D-ribosyl)glycinamide (10-formyl THF route): step 1/1. With respect to regulation, inhibited by N10-(bromoacetyl)-5,8-dideazafolate. Catalyzes the transfer of a formyl group from 10-formyltetrahydrofolate to 5-phospho-ribosyl-glycinamide (GAR), producing 5-phospho-ribosyl-N-formylglycinamide (FGAR) and tetrahydrofolate. The chain is Phosphoribosylglycinamide formyltransferase from Escherichia coli (strain K12).